Here is a 2431-residue protein sequence, read N- to C-terminus: Reducing polyketide synthase rads1 (2431 aa).

The 431-residue stretch at 10–440 folds into the Ketosynthase family 3 (KS3) domain; sequence RAPIAIIGLA…GTNAHIVLER (431 aa). Residues C184, H319, and H363 each act as for beta-ketoacyl synthase activity in the active site. Residues 558-895 form a malonyl-CoA:ACP transacylase (MAT) domain region; it reads FVFTGQGAQW…NLAAELFRRG (338 aa). Positions 944 to 1080 are N-terminal hotdog fold; the sequence is KSILGAELPS…GLISIAYEDT (137 aa). A PKS/mFAS DH domain is found at 944–1267; sequence KSILGAELPS…LAELEVDDAA (324 aa). The interval 946 to 1264 is dehydratase (DH) domain; it reads ILGAELPSMD…DFRLAELEVD (319 aa). Residue H976 is the Proton acceptor; for dehydratase activity of the active site. The C-terminal hotdog fold stretch occupies residues 1108–1267; sequence PETCSKERFY…LAELEVDDAA (160 aa). The Proton donor; for dehydratase activity role is filled by D1174. Positions 1705–2023 are enoyl reductase (ER) domain; that stretch reads GLLNTLHFVP…QGKHLGKMIL (319 aa). C1822 (phosphocysteine intermediate) is an active-site residue. Positions 2048-2228 are ketoreductase (KR) domain; sequence ATYLIVGGLG…VSVNLGIMRD (181 aa). The 78-residue stretch at 2346 to 2423 folds into the Carrier domain; the sequence is VAAAIITEAL…TFAVQIAKKS (78 aa). S2383 bears the O-(pantetheine 4'-phosphoryl)serine mark.

It functions in the pathway secondary metabolite biosynthesis. Reducing polyketide synthase; part of the gene cluster that mediates the biosynthesis of radicicol, a resorcylic acid lactone (RAL) that irreversibly inhibits the HSP90 molecular chaperone, an important target for cancer chemotherapy. The cluster encodes only two apparent post-PKS enzymes, a cytochrome P450 monooxygenase (radP) and a non-heme halogenase (radH) that introduce the epoxide and the chlorine, respectively. If this cluster includes all the genes required for radicicol biosynthesis, the remaining structural features of radicicol are presumably generated by the PKSs rads1 and rads2. The C-2' ketone could arise if the R-PKS rads1 and NR-PKS rads2 each carry out four iterations, in contrast to the five iteration-three iteration split for the hypothemycin PKSs. The origin of the cis 5',6' double bond is not known. The radicicol R-PKS radS1 ER domain may catalyze either double bond isomerization or reduction in the third iteration. This chain is Reducing polyketide synthase rads1, found in Floropilus chiversii (Chaetomium chiversii).